A 31-amino-acid polypeptide reads, in one-letter code: Photosystem II reaction center protein Psb30 (31 aa).

A helical membrane pass occupies residues 5–25; sequence IQLTSLLLIVIAGPLVIALLF.

The protein belongs to the Psb30/Ycf12 family. PSII is composed of 1 copy each of membrane proteins PsbA, PsbB, PsbC, PsbD, PsbE, PsbF, PsbH, PsbI, PsbJ, PsbK, PsbL, PsbM, PsbT, PsbX, PsbY, PsbZ, Psb30/Ycf12, peripheral proteins of the oxygen-evolving complex and a large number of cofactors. It forms dimeric complexes.

It is found in the plastid. Its subcellular location is the chloroplast thylakoid membrane. Its function is as follows. A core subunit of photosystem II (PSII), probably helps stabilize the reaction center. This Phacus acuminatus protein is Photosystem II reaction center protein Psb30.